Reading from the N-terminus, the 64-residue chain is DNA-directed RNA polymerase subunit omega (64 aa).

This sequence belongs to the RNA polymerase subunit omega family. As to quaternary structure, the RNAP catalytic core consists of 2 alpha, 1 beta, 1 beta' and 1 omega subunit. When a sigma factor is associated with the core the holoenzyme is formed, which can initiate transcription.

The catalysed reaction is RNA(n) + a ribonucleoside 5'-triphosphate = RNA(n+1) + diphosphate. Promotes RNA polymerase assembly. Latches the N- and C-terminal regions of the beta' subunit thereby facilitating its interaction with the beta and alpha subunits. The sequence is that of DNA-directed RNA polymerase subunit omega from Oceanobacillus iheyensis (strain DSM 14371 / CIP 107618 / JCM 11309 / KCTC 3954 / HTE831).